Here is a 504-residue protein sequence, read N- to C-terminus: Cobyric acid synthase (504 aa).

The GATase cobBQ-type domain maps to 251-448; that stretch reads DITIAIVQLP…LHGLFDSDAF (198 aa). The active-site Nucleophile is Cys332. His440 is an active-site residue.

This sequence belongs to the CobB/CobQ family. CobQ subfamily.

The protein operates within cofactor biosynthesis; adenosylcobalamin biosynthesis. Functionally, catalyzes amidations at positions B, D, E, and G on adenosylcobyrinic A,C-diamide. NH(2) groups are provided by glutamine, and one molecule of ATP is hydrogenolyzed for each amidation. The protein is Cobyric acid synthase of Salmonella gallinarum (strain 287/91 / NCTC 13346).